Reading from the N-terminus, the 335-residue chain is Succinylglutamate desuccinylase (335 aa).

His-59, Glu-62, and His-151 together coordinate Zn(2+). The active site involves Glu-215.

This sequence belongs to the AspA/AstE family. Succinylglutamate desuccinylase subfamily. It depends on Zn(2+) as a cofactor.

It carries out the reaction N-succinyl-L-glutamate + H2O = L-glutamate + succinate. Its pathway is amino-acid degradation; L-arginine degradation via AST pathway; L-glutamate and succinate from L-arginine: step 5/5. In terms of biological role, transforms N(2)-succinylglutamate into succinate and glutamate. This is Succinylglutamate desuccinylase from Pseudomonas putida (strain GB-1).